Here is a 667-residue protein sequence, read N- to C-terminus: MTQLSRFLYGGDYNPDQWPEETWSKDIHVFKKADINSATINIFSWALLEPREGKYNFSKLDKVVQQLSDANFDIVMGTATAAMPAWMFKKYPDIARVDYQDRRHVFGQRHNFCPNSSNYQRLAGELVKQLVERYKDNKHIVVWHINNEYGGNCYCENCQNAFRKWLKNKYKTVEGLNKAWNMNVWSHTIYDWDEIVVPNELGDVWGIEGSETIVAGLSIDYLRFQSESMQNLFKMEKKIIKKYDPETPVTTNFHGLPNKMVDYQKWAKGQDIISYDSYPTYDAPAYKAAFLYDLMRSLKHQPFMLMESAPSQVNWQPYSPLKRPGQMEATEFQAVAHGADTVQFFQLKQAVGGSEKFHSAVIAHSQRTDTRVFKELADLGKKLKNAGPTILGSKTKAKVAIVFDWSNFWSYEYVDGITQDLNYVDSILDYYRQFYERNIPTDIIGVDDDFSNYDLVVAPVLYMVKHGLDKKINDYVENGGNFVTTYMSGMVNSSDNVYLGGYPGPLKEVTGIWVEESDAVVPGQKIKVLMNGKDYDTGLICNLIHPNDAKILATYASEFYAGTPAVTENQYGKGRAWYIGTRLEHQGLTQLFNHIIFETGVESLVCDSHKLEITKRVTEDGKELYFVLNMSNEERTLPSKFTGYEDILTGEKAHKDMKGWDVQVLRN.

Arg109 lines the substrate pocket. Residue Cys113 participates in Zn(2+) binding. Residue Asn147 coordinates substrate. Glu148 (proton donor) is an active-site residue. Zn(2+) contacts are provided by Cys153, Cys155, and Cys158. The active-site Nucleophile is Glu307. Residues Trp315 and Glu355–His358 each bind substrate.

It belongs to the glycosyl hydrolase 42 family.

It catalyses the reaction Hydrolysis of terminal non-reducing beta-D-galactose residues in beta-D-galactosides.. Catalyzes the hydrolysis of lactose to its constituent monosaccharides glucose and galactose. This is Beta-galactosidase LacZ from Lactobacillus acidophilus (strain ATCC 700396 / NCK56 / N2 / NCFM).